The chain runs to 331 residues: 6-phosphogluconolactonase (331 aa).

The protein belongs to the cycloisomerase 2 family.

The catalysed reaction is 6-phospho-D-glucono-1,5-lactone + H2O = 6-phospho-D-gluconate + H(+). Its pathway is carbohydrate degradation; pentose phosphate pathway; D-ribulose 5-phosphate from D-glucose 6-phosphate (oxidative stage): step 2/3. Functionally, catalyzes the hydrolysis of 6-phosphogluconolactone to 6-phosphogluconate. The sequence is that of 6-phosphogluconolactonase from Klebsiella pneumoniae (strain 342).